The sequence spans 356 residues: Carbohydrate sulfotransferase 10 (356 aa).

Residues 1-6 are Cytoplasmic-facing; that stretch reads MHHQWL. The chain crosses the membrane as a helical; Signal-anchor for type II membrane protein span at residues 7–27; that stretch reads LLAACFWVIFMFMVASKFITL. At 28-356 the chain is on the lumenal side; that stretch reads TFKDPDGYSA…GYQKPDFLLN (329 aa). An N-linked (GlcNAc...) asparagine glycan is attached at Asn-99. 3'-phosphoadenylyl sulfate is bound by residues 127–133 and 189–197; these read PKVGNTQ and RDPFERLIS. 2 N-linked (GlcNAc...) asparagine glycosylation sites follow: Asn-228 and Asn-316.

It belongs to the sulfotransferase 2 family.

It localises to the golgi apparatus membrane. The enzyme catalyses 3-O-{beta-D-GlcA-(1-&gt;[3)-alpha-D-Xyl-(1-&gt;3)-beta-D-GlcA-(1-&gt;](n)-4)-beta-D-Xyl-(1-&gt;4)-Rib-ol-P-Rib-ol-P-3-beta-D-GalNAc-(1-&gt;3)-beta-D-GlcNAc-(1-&gt;4)-O-6-P-alpha-D-Man}-L-Thr-[protein] + 3'-phosphoadenylyl sulfate = 3-O-{O-3-S-beta-D-GlcA-(1-&gt;[3)-alpha-D-Xyl-(1-&gt;3)-beta-D-GlcA-(1-&gt;](n)-4)-beta-D-Xyl-(1-&gt;4)-Rib-ol-P-Rib-ol-P-3-beta-D-GalNAc-(1-&gt;3)-beta-D-GlcNAc-(1-&gt;4)-O-6-P-alpha-D-Man}-L-Thr-[protein] + adenosine 3',5'-bisphosphate + H(+). It carries out the reaction 17beta-estradiol 3-O-(beta-D-glucuronate) + 3'-phosphoadenylyl sulfate = 17beta-estradiol 3-O-(3-sulfo-beta-D-glucuronate) + adenosine 3',5'-bisphosphate + H(+). The catalysed reaction is 17beta-estradiol 3-O-(beta-D-glucuronate) 17-sulfate + 3'-phosphoadenylyl sulfate = 17beta-estradiol 3-O-(3-sulfo-beta-D-glucuronate) 17-sulfate + adenosine 3',5'-bisphosphate + H(+). It catalyses the reaction 17beta-estradiol 17-O-(beta-D-glucuronate) + 3'-phosphoadenylyl sulfate = 17beta-estradiol 17-O-(3-sulfo-beta-D-glucuronate) + adenosine 3',5'-bisphosphate + H(+). The enzyme catalyses 16alpha,17beta-estriol 3-O-(beta-D-glucuronate) + 3'-phosphoadenylyl sulfate = 16alpha,17beta-estriol 3-O-(3-sulfo-beta-D-glucuronate) + adenosine 3',5'-bisphosphate + H(+). It carries out the reaction 16alpha,17beta-estriol 16-O-(beta-D-glucuronate) + 3'-phosphoadenylyl sulfate = 16alpha,17beta-estriol 16-O-(3-sulfo-beta-D-glucuronate) + adenosine 3',5'-bisphosphate + H(+). The catalysed reaction is 16alpha,17beta-estriol 17-O-(beta-D-glucuronate) + 3'-phosphoadenylyl sulfate = 16alpha,17beta-estriol 17-O-(3-sulfo-beta-D-glucuronate) + adenosine 3',5'-bisphosphate + H(+). It catalyses the reaction estrone 3-O-(beta-D-glucuronate) + 3'-phosphoadenylyl sulfate = estrone 3-O-(3-sulfo-beta-D-glucuronate) + adenosine 3',5'-bisphosphate + H(+). The enzyme catalyses 3alpha,20alpha-dihydroxy-5beta-pregnane 3-O-(beta-D-glucuronate) + 3'-phosphoadenylyl sulfate = 3alpha,20alpha-dihydroxy-5beta-pregnane 3-O-(3-sulfo-beta-D-glucuronate) + adenosine 3',5'-bisphosphate + H(+). It carries out the reaction testosterone 17-O-(beta-D-glucuronate) + 3'-phosphoadenylyl sulfate = testosterone 17-O-(3-sulfo-beta-D-glucuronate) + adenosine 3',5'-bisphosphate + H(+). The catalysed reaction is 3beta-androst-5-en-17-one 3-O-(beta-D-glucuronate) + 3'-phosphoadenylyl sulfate = 3beta-androst-5-en-17-one 3-O-(3-sulfo-beta-D-glucuronate) + adenosine 3',5'-bisphosphate + H(+). It catalyses the reaction 3alpha,17alpha-dihydroxy-5beta-androstane-11-one-17beta-carboxylate 3-O-(beta-D-glucuronate) + 3'-phosphoadenylyl sulfate = 3alpha,17alpha-dihydroxy-5beta-androstane-11-one-17beta-carboxylate 3-O-(3-sulfo-beta-D-glucuronate) + adenosine 3',5'-bisphosphate + H(+). The enzyme catalyses 3alpha-hydroxyetiocholan-17-one 3-O-(beta-D-glucuronate) + 3'-phosphoadenylyl sulfate = 3alpha-hydroxyetiocholan-17-one 3-O-(3-sulfo-beta-D-glucuronate) + adenosine 3',5'-bisphosphate + H(+). Its pathway is steroid metabolism. It functions in the pathway protein modification; carbohydrate sulfation. Functionally, catalyzes the transfer of sulfate from 3'-phosphoadenylyl sulfate (PAPS) to position 3 of terminal glucuronic acid of both protein- and lipid-linked oligosaccharides. Participates in biosynthesis of HNK-1 carbohydrate structure 3-O-sulfo-beta-D-GlcA-(1-&gt;3)-beta-D-Gal-(1-&gt;4)-D-GlcNAc-R, a sulfated glucuronyl-lactosaminyl residue carried by many neural recognition molecules, which is involved in cell interactions during ontogenetic development and in synaptic plasticity in the adult. May be indirectly involved in synapse plasticity of the hippocampus, via its role in HNK-1 biosynthesis. Sulfates terminal glucuronyl residue of the laminin globular (LG)-domain binding epitope on DAG1/alpha-dystroglycan and prevents further polymerization by LARGE1 glycosyltransferase. Likely defines the chain length of LG epitope, conferring binding specificity to extracellular matrix components. Plays a role in down-regulating the steroid hormones. Sulfates glucuronidated estrogens and androgens with an impact in hormone cycle and fertility. Has a preference for glucuronyl moiety at the 3-hydroxyl group of a sterol ring rather than the 17-hydroxyl group, showing high catalytic efficiency for 17beta-estradiol 3-O-(beta-D-glucuronate) and dehydroepiandrosterone 3-O-(beta-D-glucuronate) hormones. The chain is Carbohydrate sulfotransferase 10 from Mus musculus (Mouse).